The following is a 499-amino-acid chain: Glucooligosaccharide oxidase (499 aa).

An N-terminal signal peptide occupies residues 1–25 (MVRIQELTAALSLASVVQASWIQKR). Residues cysteine 31 and cysteine 80 are joined by a disulfide bond. The FAD-binding PCMH-type domain maps to 58-230 (VDYDPAAIAI…SEFEFNTFEA (173 aa)). The segment at residues 95 to 155 (HSYGSYGFGG…GNRALSHGTC (61 aa)) is a cross-link (6-(S-cysteinyl)-8alpha-(pros-histidyl)-FAD (His-Cys)). Substrate contacts are provided by tyrosine 97, threonine 154, and arginine 270. N-linked (GlcNAc...) asparagine glycosylation is found at asparagine 330 and asparagine 366. Positions 378 and 409 each coordinate substrate. An N-linked (GlcNAc...) asparagine glycan is attached at asparagine 419. Tyrosine 454 is a binding site for substrate. Residue tyrosine 454 is the Proton acceptor of the active site.

This sequence belongs to the oxygen-dependent FAD-linked oxidoreductase family. The cofactor is FAD. Post-translationally, the FAD cofactor is bound via a bicovalent 6-S-cysteinyl, 8alpha-N1-histidyl FAD linkage.

It is found in the secreted. It catalyses the reaction beta-lactose + O2 = lactobiono-1,5-lactone + H2O2. The catalysed reaction is D-cellobiose + O2 = D-cellobiono-1,5-lactone + H2O2. It carries out the reaction D-cellotriose + O2 = D-cellotriono-1,5-lactone + H2O2. The enzyme catalyses D-cellotetraose + O2 = D-cellotetraono-1,5-lactone + H2O2. It catalyses the reaction D-cellopentaose + O2 = D-cellopentaono-1,5-lactone + H2O2. The catalysed reaction is D-cellohexaose + O2 = D-cellohexaono-1,5-lactone + H2O2. Functionally, catalyzes the selective oxidation of C1 hydroxyl moieties on mono- and disaccharides with concomitant reduction of molecular oxygen to hydrogen peroxide. This results in the formation of the corresponding lactones, which typically undergo spontaneous hydrolysis. Glucooligosaccharide oxidase is able to oxidize the monosaccharide D-glucose as well as the disaccharides maltose, cellobiose, and lactose. In addition, it shows high selectivity for cello- and maltooligosaccharides, indicating that glucooligosaccharide oxidase prefers oligosaccharides with a beta-D-glucosyl unit on the reducing end and additional sugar units linked by alpha- or beta-1,4 glucosidic bonds. This Sarocladium strictum (Black bundle disease fungus) protein is Glucooligosaccharide oxidase (gluO).